Here is a 228-residue protein sequence, read N- to C-terminus: Casparian strip membrane protein 2 (228 aa).

The Cytoplasmic segment spans residues 1–65; the sequence is MSTSDAAATV…FRRADRGSRC (65 aa). Residues 66–86 form a helical membrane-spanning segment; the sequence is VALLDLVLRVAAFGPALAAAI. Residues 87 to 113 are Extracellular-facing; it reads ATGTSDETLSVFTQFFQFHARFDDFPA. The chain crosses the membrane as a helical span at residues 114-134; the sequence is LLFFMVANAIAAGYLVLSLPF. At 135-149 the chain is on the cytoplasmic side; that stretch reads SAVVVLRPQAIGLRH. A helical transmembrane segment spans residues 150-170; that stretch reads LLLICDLIIAALLTAAAAAAA. Residues 171-201 are Extracellular-facing; sequence AIVDLAHSGNQRANWVPICMQFHGFCQRTSG. A helical membrane pass occupies residues 202 to 222; the sequence is AVVASFLAVLVLLFLVILAAF. Topologically, residues 223–228 are cytoplasmic; it reads TIRKRC.

It belongs to the Casparian strip membrane proteins (CASP) family. As to quaternary structure, homodimer and heterodimers.

It localises to the cell membrane. Functionally, regulates membrane-cell wall junctions and localized cell wall deposition. Required for establishment of the Casparian strip membrane domain (CSD) and the subsequent formation of Casparian strips, a cell wall modification of the root endodermis that determines an apoplastic barrier between the intraorganismal apoplasm and the extraorganismal apoplasm and prevents lateral diffusion. In Zea mays (Maize), this protein is Casparian strip membrane protein 2.